Consider the following 203-residue polypeptide: Ras-related protein Rab-24 (203 aa).

Tyrosine 17 carries the phosphotyrosine modification. Residues glycine 19, lysine 20, threonine 21, and threonine 40 each coordinate GTP. Positions 21, 40, and 63 each coordinate Mg(2+). Residues 30 to 45 (DRFLVGPYQNTIGAAF) form a switch I region. The switch II stretch occupies residues 63–80 (DTAGSERYEAMSRIYYRG). GTP is bound by residues glycine 66, lysine 121, aspartate 123, and lysine 156. Tyrosine 172 is modified (phosphotyrosine). 2 S-geranylgeranyl cysteine lipidation sites follow: cysteine 200 and cysteine 201.

This sequence belongs to the small GTPase superfamily. Rab family. As to quaternary structure, interacts with ZFYVE20. Does not interact with the GDP dissociation inhibitors ARHGDIA and ARHGDIB. It depends on Mg(2+) as a cofactor. Post-translationally, prenylated; prenylation is required for RAB24 localization to autophagosomes. Isoprenylation is inefficient compared to other Rab family members. Phosphorylated at Tyr-17 and Tyr-172. Cytosolic pool of RAB24 is more phosphorylated than the membrane-associated pool. As to expression, widely expressed, with highest expression in brain.

It localises to the cytoplasm. The protein resides in the cytosol. It is found in the membrane. The protein localises to the cytoplasmic vesicle. Its subcellular location is the autophagosome membrane. It localises to the perinuclear region. The protein resides in the cytoskeleton. It is found in the spindle. It catalyses the reaction GTP + H2O = GDP + phosphate + H(+). Regulated by guanine nucleotide exchange factors (GEFs) which promote the exchange of bound GDP for free GTP. Regulated by GTPase activating proteins (GAPs) which increase the GTP hydrolysis activity. Inhibited by GDP dissociation inhibitors (GDIs). Functionally, the small GTPases Rab are key regulators of intracellular membrane trafficking, from the formation of transport vesicles to their fusion with membranes. Rabs cycle between an inactive GDP-bound form and an active GTP-bound form that is able to recruit to membranes different sets of downstream effectors directly responsible for vesicle formation, movement, tethering and fusion. RAB24 is an atypical RAB protein that presents low GTPase activity and thereby exists predominantly in the GTP-bound active state. RAB24 is required for the clearance of late autophagic vacuoles under basal conditions. It is not needed for starvation-induced autophagy. Involved in the modulation of meiotic apparatus assembly and meiotic progression during oocyte maturation, possibly through regulation of kinetochore-microtubule interaction. This is Ras-related protein Rab-24 from Mus musculus (Mouse).